The sequence spans 68 residues: Non-specific lipid-transfer protein 2 (68 aa).

It belongs to the plant LTP family.

Functionally, plant non-specific lipid-transfer proteins transfer phospholipids as well as galactolipids across membranes. May play a role in wax or cutin deposition in the cell walls of expanding epidermal cells and certain secretory tissues. In Prunus armeniaca (Apricot), this protein is Non-specific lipid-transfer protein 2.